The chain runs to 210 residues: N-(5'-phosphoribosyl)anthranilate isomerase (210 aa).

It belongs to the TrpF family.

The catalysed reaction is N-(5-phospho-beta-D-ribosyl)anthranilate = 1-(2-carboxyphenylamino)-1-deoxy-D-ribulose 5-phosphate. The protein operates within amino-acid biosynthesis; L-tryptophan biosynthesis; L-tryptophan from chorismate: step 3/5. This is N-(5'-phosphoribosyl)anthranilate isomerase from Pseudomonas fluorescens (strain SBW25).